The chain runs to 181 residues: Lectin beta-1 and beta-2 chains (181 aa).

The Mn(2+) site is built by glutamate 119 and aspartate 121. Aspartate 121, phenylalanine 123, asparagine 125, and aspartate 129 together coordinate Ca(2+). Residues aspartate 129 and histidine 136 each coordinate Mn(2+).

This sequence belongs to the leguminous lectin family. In terms of assembly, tetramer of two alpha and two beta chains.

This Lathyrus ochrus (Cyprus-vetch) protein is Lectin beta-1 and beta-2 chains.